A 574-amino-acid chain; its full sequence is Egalitarian protein homolog (574 aa).

Residues 259-278 (LNEDGSENGSDEGEETNNNG) are disordered. Over residues 262–273 (DGSENGSDEGEE) the composition is skewed to acidic residues. In terms of domain architecture, 3'-5' exonuclease spans 312-414 (NMEKKVVGLD…SLLQHEKFNK (103 aa)).

Component of a dynein-regulating complex composed of at least bicd-1, dlc-1 and egal-1.

It localises to the nucleus envelope. Its function is as follows. Part of a complex with bicd-1 and dlc-1, which is recruited to the nuclear envelope by unc-83, where in turn, it recruits dynein to the nuclear surface and regulates nuclear migration in hypodermal precursor cells. This is Egalitarian protein homolog from Caenorhabditis elegans.